The following is a 296-amino-acid chain: Urease accessory protein UreD (296 aa).

Belongs to the UreD family. As to quaternary structure, ureD, UreF and UreG form a complex that acts as a GTP-hydrolysis-dependent molecular chaperone, activating the urease apoprotein by helping to assemble the nickel containing metallocenter of UreC. The UreE protein probably delivers the nickel.

The protein localises to the cytoplasm. In terms of biological role, required for maturation of urease via the functional incorporation of the urease nickel metallocenter. This is Urease accessory protein UreD from Methylibium petroleiphilum (strain ATCC BAA-1232 / LMG 22953 / PM1).